A 144-amino-acid polypeptide reads, in one-letter code: Large ribosomal subunit protein uL16 (144 aa).

It belongs to the universal ribosomal protein uL16 family. Part of the 50S ribosomal subunit.

Its function is as follows. Binds 23S rRNA and is also seen to make contacts with the A and possibly P site tRNAs. This is Large ribosomal subunit protein uL16 from Listeria innocua serovar 6a (strain ATCC BAA-680 / CLIP 11262).